The sequence spans 286 residues: Bifunctional protein FolD (286 aa).

NADP(+)-binding positions include 166 to 168 (GAS) and Ile232.

The protein belongs to the tetrahydrofolate dehydrogenase/cyclohydrolase family. In terms of assembly, homodimer.

The enzyme catalyses (6R)-5,10-methylene-5,6,7,8-tetrahydrofolate + NADP(+) = (6R)-5,10-methenyltetrahydrofolate + NADPH. The catalysed reaction is (6R)-5,10-methenyltetrahydrofolate + H2O = (6R)-10-formyltetrahydrofolate + H(+). The protein operates within one-carbon metabolism; tetrahydrofolate interconversion. Its function is as follows. Catalyzes the oxidation of 5,10-methylenetetrahydrofolate to 5,10-methenyltetrahydrofolate and then the hydrolysis of 5,10-methenyltetrahydrofolate to 10-formyltetrahydrofolate. The sequence is that of Bifunctional protein FolD from Marinobacter nauticus (strain ATCC 700491 / DSM 11845 / VT8) (Marinobacter aquaeolei).